Here is a 582-residue protein sequence, read N- to C-terminus: Arginine--tRNA ligase (582 aa).

The short motif at A136–H146 is the 'HIGH' region element.

The protein belongs to the class-I aminoacyl-tRNA synthetase family. In terms of assembly, monomer.

The protein resides in the cytoplasm. The enzyme catalyses tRNA(Arg) + L-arginine + ATP = L-arginyl-tRNA(Arg) + AMP + diphosphate. The sequence is that of Arginine--tRNA ligase from Novosphingobium aromaticivorans (strain ATCC 700278 / DSM 12444 / CCUG 56034 / CIP 105152 / NBRC 16084 / F199).